Reading from the N-terminus, the 272-residue chain is Small ribosomal subunit protein uS2 (272 aa).

The disordered stretch occupies residues Leu-251–Glu-272. Low complexity predominate over residues Thr-253–Glu-264.

Belongs to the universal ribosomal protein uS2 family.

The sequence is that of Small ribosomal subunit protein uS2 from Bifidobacterium adolescentis (strain ATCC 15703 / DSM 20083 / NCTC 11814 / E194a).